The primary structure comprises 361 residues: Spermidine/putrescine import ATP-binding protein PotA (361 aa).

The 231-residue stretch at 4-234 folds into the ABC transporter domain; sequence LEIKNVVKRF…PKNRFVADFL (231 aa). 36-43 is an ATP binding site; that stretch reads GPSGCGKT.

Belongs to the ABC transporter superfamily. Spermidine/putrescine importer (TC 3.A.1.11.1) family. As to quaternary structure, the complex is composed of two ATP-binding proteins (PotA), two transmembrane proteins (PotB and PotC) and a solute-binding protein (PotD).

The protein localises to the cell inner membrane. It carries out the reaction ATP + H2O + polyamine-[polyamine-binding protein]Side 1 = ADP + phosphate + polyamineSide 2 + [polyamine-binding protein]Side 1.. Its function is as follows. Part of the ABC transporter complex PotABCD involved in spermidine/putrescine import. Responsible for energy coupling to the transport system. The chain is Spermidine/putrescine import ATP-binding protein PotA from Chromobacterium violaceum (strain ATCC 12472 / DSM 30191 / JCM 1249 / CCUG 213 / NBRC 12614 / NCIMB 9131 / NCTC 9757 / MK).